Reading from the N-terminus, the 185-residue chain is Elongation factor P 1 (185 aa).

It belongs to the elongation factor P family.

The protein resides in the cytoplasm. It participates in protein biosynthesis; polypeptide chain elongation. Its function is as follows. Involved in peptide bond synthesis. Stimulates efficient translation and peptide-bond synthesis on native or reconstituted 70S ribosomes in vitro. Probably functions indirectly by altering the affinity of the ribosome for aminoacyl-tRNA, thus increasing their reactivity as acceptors for peptidyl transferase. This is Elongation factor P 1 (efp1) from Chlamydia trachomatis serovar D (strain ATCC VR-885 / DSM 19411 / UW-3/Cx).